Consider the following 56-residue polypeptide: MPQRASIQQTADFLGVSTKTVRRYIADGRLKAVRLGPRLIRVERDSVEALMRPIGK.

It belongs to the L5likevirus excisionase protein family.

Functionally, excisionase and integrase are necessary for the excision of prophage from the host genome by site-specific recombination at the att site. This chain is Excisionase (XIS), found in Mycobacterium (Mycobacteriophage D29).